The chain runs to 689 residues: Solute carrier organic anion transporter family member 1B2 (689 aa).

The Cytoplasmic portion of the chain corresponds to 1–26 (MDQTQHPSKAAQPLRSEKTRHCDGFR). The helical transmembrane segment at 27-46 (IFLAALSFSYICKALGGVIM) threads the bilayer. The Extracellular segment spans residues 47–65 (KSSITQIERRFDIPSSISG). A helical transmembrane segment spans residues 66 to 86 (LIDGGFEIGNLLVIVFVSYFG). The Cytoplasmic segment spans residues 87-92 (SKLHRP). A helical transmembrane segment spans residues 93 to 117 (KLIGTGCFIMGIGSILTALPHFFMG). Topologically, residues 118–163 (YYRYATENDISSLHNSTLTCLVNQTTSLTGTSPEIMEKGCEKGSNS) are extracellular. N-linked (GlcNAc...) asparagine glycosylation is found at Asn-132 and Asn-140. Residues 164–192 (YTWIYVLMGNMLRGIGETPIVPLGVSYID) form a helical membrane-spanning segment. Over 193-211 (DFAKEGNSSMYLGTLHTIA) the chain is Cytoplasmic. A helical membrane pass occupies residues 212 to 232 (MIGPILGFIMSSVFAKLYVDV). At 233-250 (GYVDLRSVRITPQDARWV) the chain is on the extracellular side. Residues 251 to 275 (GAWWLGFIVNGLLCIICSIPFFFLP) traverse the membrane as a helical segment. Residues 276–326 (KIPKRSQKERKNSASLHVLKTDEDKNPVTNPTTQEKQAPANLTGFLWSLRS) are Cytoplasmic-facing. Phosphoserine is present on residues Ser-288 and Ser-290. The chain crosses the membrane as a helical span at residues 327–348 (ILTNEQYVIFLILTLLQISSFI). At 349–368 (GSFTYLFKFIEQQFGQTASQ) the chain is on the extracellular side. The helical transmembrane segment at 369-392 (ANFLLGVITIPTMASGMFLGGYLI) threads the bilayer. The Cytoplasmic segment spans residues 393-396 (KRLK). A helical transmembrane segment spans residues 397 to 420 (LTLLGITKFVFFTTTMAYVFYLSY). The Extracellular portion of the chain corresponds to 421–533 (FLLICENKAF…DKCKTKYYFY (113 aa)). The Kazal-like domain occupies 448–505 (DVPLSYCNSDCICDKNQWEPVCGENGVTYISPCLAGCKSFRGDKKLMNIEFYDCSCVS). Intrachain disulfides connect Cys-454-Cys-484, Cys-460-Cys-480, and Cys-469-Cys-503. Residue Asn-513 is glycosylated (N-linked (GlcNAc...) asparagine). Residues 534–556 (ITFQVIISFFTALGSTSLMLILI) traverse the membrane as a helical segment. At 557-565 (RSVQPELKS) the chain is on the cytoplasmic side. Residues 566-591 (LGMGFHSLVVRTLGGILAPVYYGALI) traverse the membrane as a helical segment. Residues 592 to 625 (DRTCMKWSVTSCGARGACRLYNSRLFGMIYVGLS) lie on the Extracellular side of the membrane. The chain crosses the membrane as a helical span at residues 626 to 643 (IALKTPILLLYVALIYVM). Residues 644 to 689 (KRKMKRNDNKILENGRKFTDEGNPEPVNNNGYSCVPSDEKNSETPL) are Cytoplasmic-facing. Residues 658–689 (GRKFTDEGNPEPVNNNGYSCVPSDEKNSETPL) form a disordered region. Thr-662 bears the Phosphothreonine mark. The residue at position 680 (Ser-680) is a Phosphoserine. The segment covering 680–689 (SDEKNSETPL) has biased composition (basic and acidic residues).

It belongs to the organo anion transporter (TC 2.A.60) family. Liver specific.

Its subcellular location is the cell membrane. It carries out the reaction estrone 3-sulfate(out) = estrone 3-sulfate(in). It catalyses the reaction taurocholate(out) = taurocholate(in). The catalysed reaction is prostaglandin E2(out) = prostaglandin E2(in). The enzyme catalyses L-thyroxine(out) = L-thyroxine(in). In terms of biological role, mediates the Na(+)-independent uptake of organic anions such as taurochlate, bromosulfophthalein and steroid conjugates (estrone 3-sulfate, 17-beta-glucuronosyl estradiol, dehydroepiandrosterone sulfate). Also transports prostaglandin E2 and L-thyroxine (T4). Shows a pH-sensitive substrate specificity which may be ascribed to the protonation state of the binding site and leads to a stimulation of substrate transport in an acidic microenvironment. Hydrogencarbonate/HCO3(-) acts as the probable counteranion that exchanges for organic anions. This Mus musculus (Mouse) protein is Solute carrier organic anion transporter family member 1B2 (Slco1b2).